Here is a 964-residue protein sequence, read N- to C-terminus: Probable LRR receptor-like serine/threonine-protein kinase IRK (964 aa).

The first 20 residues, 1 to 20 (MYKALIFTVLLVSAVAPVRS), serve as a signal peptide directing secretion. Residues 21–603 (LDPPLNDDVL…GHKRILLSIS (583 aa)) lie on the Extracellular side of the membrane. LRR repeat units lie at residues 92–116 (LQFLHKLSLSNNNLTGIINPNMLLS), 117–141 (LVNLKVVDLSSNGLSGSLPDEFFRQ), 143–166 (GSLRVLSLAKNKLTGKIPVSISSC), 168–190 (SLAALNLSSNGFSGSMPLGIWSL), 191–214 (NTLRSLDLSRNELEGEFPEKIDRL), 215–238 (NNLRALDLSRNRLSGPIPSEIGSC), 240–261 (LLKTIDLSENSLSGSLPNTFQQ), 263–286 (SLCYSLNLGKNALEGEVPKWIGEM), 287–310 (RSLETLDLSMNKFSGQVPDSIGNL), 312–334 (ALKVLNFSGNGLIGSLPVSTANC), and 335–358 (INLLALDLSGNSLTGKLPMWLFQD). Asn104 carries N-linked (GlcNAc...) asparagine glycosylation. Asn173 carries an N-linked (GlcNAc...) asparagine glycan. Asn317 carries an N-linked (GlcNAc...) asparagine glycan. Asn370 carries N-linked (GlcNAc...) asparagine glycosylation. LRR repeat units follow at residues 375–399 (IKKIQVLDLSHNAFSGEIGAGLGDL), 400–423 (RDLEGLHLSRNSLTGPIPSTIGEL), 425–447 (HLSVLDVSHNQLNGMIPRETGGA), 448–471 (VSLEELRLENNLLEGNIPSSIKNC), 472–495 (SSLRSLILSHNKLLGSIPPELAKL), 496–519 (TRLEEVDLSFNELAGTLPKQLANL), and 521–544 (YLHTFNISHNHLFGELPAGGIFNG). An N-linked (GlcNAc...) asparagine glycan is attached at Asn470. Residues Asn526, Asn562, and Asn578 are each glycosylated (N-linked (GlcNAc...) asparagine). A helical membrane pass occupies residues 604-624 (SLIAISAAAAIVVGVIAITVL). The Cytoplasmic portion of the chain corresponds to 625-964 (NLRVRASTVS…SGSSDELGSS (340 aa)). A Protein kinase domain is found at 678–951 (LNKDCELGRG…GEAVNILRMI (274 aa)). Residues 684–692 (LGRGGFGAV) and Lys706 contribute to the ATP site.

It belongs to the protein kinase superfamily. Ser/Thr protein kinase family. Interacts with IRKI. Post-translationally, autophosphorylated. In terms of tissue distribution, highly expressed in root tips, shoot apices and developing flowers.

The protein localises to the cell membrane. It catalyses the reaction L-seryl-[protein] + ATP = O-phospho-L-seryl-[protein] + ADP + H(+). The enzyme catalyses L-threonyl-[protein] + ATP = O-phospho-L-threonyl-[protein] + ADP + H(+). The protein is Probable LRR receptor-like serine/threonine-protein kinase IRK of Arabidopsis thaliana (Mouse-ear cress).